A 416-amino-acid polypeptide reads, in one-letter code: MFSVFEEITRIVVKEMDAGGDMIAVRSLVDADRFRCFHLVGEKRTFFGCRHYTTGLTLMDILDTDGDKWLDELDSGLQGQKAEFQILDNVDSTGELIVRLPKEITISGSFQGFHHQKIKISENRISQQYLATLENRKLKRELPFSFRSINTRENLYLVTETLETVKEETLKSDRQYKFWSQISQGHLSYKHKGQREVTIPPNRVLSYRVKQLVFPNKETMNIHFRGKTKSFPEEKDGASSCLGKSLGSEDSRNMKEKLEDMESVLKDLTEEKRKDVLNSLAKCLGKEDIRQDLEQRVSEVLISGELHMEDPDKPLLSSLFNAAGVLVEARAKAILDFLDALLELSEEQQFVAEALEKGTLPLLKDQVKSVMEQNWDELASSPPDMDYDPEARILCALYVVVSILLELAEGPTSVSS.

The interval 1–280 is triggers pyroptosis; it reads MFSVFEEITR…EKRKDVLNSL (280 aa). 2 beta stranded membrane-spanning segments follow: residues 83-101 and 102-125; these read EFQI…VRLP and KEIT…ENRI. (Microbial infection) Glycyl lysine isopeptide (Lys-Gly) (interchain with G-Cter in ubiquitin) cross-links involve residues Lys166, Lys177, Lys190, and Lys192. 2 beta stranded membrane passes run 167–183 and 184–198; these read EETL…SQIS and QGHL…REVT. The segment at 229–250 is disordered; that stretch reads KSFPEEKDGASSCLGKSLGSED. The stretch at 248 to 276 forms a coiled coil; sequence SEDSRNMKEKLEDMESVLKDLTEEKRKDV. Met308 participates in a covalent cross-link: (Microbial infection) Glycyl lysine isopeptide (Lys-Gly) (interchain with G-Cter in ubiquitin).

It belongs to the gasdermin family. In terms of assembly, homooligomer; homooligomeric ring-shaped pore complex containing 24-26 subunits when inserted in the membrane. Post-translationally, cleavage by granzyme A (GZMA) relieves autoinhibition by releasing the N-terminal moiety (Gasdermin-B, N-terminal) that initiates pyroptosis. Not cleaved by other granzymes. Major cleavage site takes places after Lys-244; a minor cleavage site takes place after Lys-229. Cleavage by neutrophil elastase ELANE, inhibits its ability to trigger pyroptosis. Palmitoylated. In terms of processing, (Microbial infection) Ubiquitinated by S.flexneri IpaH7.8, leading to its degradation by the proteasome, thereby preventing its ability to form pores in bacterial-derived membranes. In the gastrointestinal tract, expressed in proliferating cells, including in the basal cell layer of esophagus and in isthmus/neck of stomach.

It is found in the cytoplasm. It localises to the cell membrane. Its activity is regulated as follows. The full-length protein before cleavage is inactive: intramolecular interactions between N- and C-terminal domains mediate autoinhibition in the absence of activation signal. The intrinsic pyroptosis-inducing activity is carried by the released N-terminal moiety (Gasdermin-B, N-terminal) following cleavage by granzyme A (GZMA). Precursor of a pore-forming protein that acts as a downstream mediator of granzyme-mediated cell death. This form constitutes the precursor of the pore-forming protein: upon cleavage, the released N-terminal moiety (Gasdermin-B, N-terminal) binds to membranes and forms pores, triggering pyroptosis. Also acts as a regulator of epithelial cell repair independently of programmed cell death: translocates to the plasma membrane and promotes epithelial maintenance and repair by regulating PTK2/FAK-mediated phosphorylation of PDGFA. In terms of biological role, pore-forming protein produced by cleavage by granzyme A (GZMA), which causes membrane permeabilization and pyroptosis in target cells of cytotoxic T and natural killer (NK) cells. Key downstream mediator of granzyme-mediated cell death: (1) granzyme A (GZMA), delivered to target cells from cytotoxic T- and NK-cells, (2) specifically cleaves Gasdermin-B to generate this form. After cleavage, moves to the plasma membrane, homooligomerizes within the membrane and forms pores of 10-15 nanometers (nm) of inner diameter, triggering pyroptosis. The different isoforms recognize and bind different phospholipids on membranes, promoting cell death of different target cells. Functionally, precursor of a pore-forming protein that acts as a downstream mediator of granzyme-mediated cell death and mediates pyroptosis. Following cleavage and activation by granzyme A (GZMA), the N-terminal part binds to membrane inner leaflet lipids, homooligomerizes within the human plasma membrane and forms pores of 10-15 nanometers (nm) of inner diameter, triggering pyroptosis. Recognizes and binds membrane inner leaflet lipids of human cells, such as phosphatidylinositol 4-phosphate, phosphatidylinositol 5-phosphate, bisphosphorylated phosphatidylinositols, such as phosphatidylinositol (4,5)-bisphosphate, and more weakly to phosphatidic acid. Also binds sufatide, a component of the apical membrane of epithelial cells. Its function is as follows. Precursor of a pore-forming protein that acts as a downstream mediator of granzyme-mediated cell death and mediates pyroptosis of human cells. Following cleavage and activation by granzyme A (GZMA), the N-terminal part binds to membrane inner leaflet lipids, homooligomerizes within the human plasma membrane and forms pores of 10-15 nanometers (nm) of inner diameter, triggering pyroptosis. Precursor of a pore-forming protein that acts as a downstream mediator of granzyme-mediated cell death and specifically mediates cell death of Gram-negative bacteria in response to infection. Following cleavage and activation by granzyme A (GZMA), the N-terminal part recognizes and binds phospholipids found on Gram-negative bacterial membranes, such as lipid A and cariolipin, homooligomerizes within the bacterial membranes and forms pores, triggering pyroptosis followed by cell death. In contrast to isoform 4, does not bind to membrane inner leaflet lipids of host human cell, such as phosphatidylinositol 4-phosphate, phosphatidylinositol 5-phosphate, bisphosphorylated phosphatidylinositols, such as phosphatidylinositol (4,5)-bisphosphate. In terms of biological role, not able to trigger pyroptosis. In Homo sapiens (Human), this protein is Gasdermin-B.